Consider the following 21-residue polypeptide: Dahlein-5.2 (21 aa).

Expressed by the skin dorsal glands.

It localises to the secreted. Functionally, has no antimicrobial activity. Strongly inhibits the formation of NO by neuronal nitric oxide synthase at micromolar concentrations. This chain is Dahlein-5.2, found in Ranoidea dahlii (Dahl's aquatic frog).